We begin with the raw amino-acid sequence, 218 residues long: Uracil-DNA glycosylase (218 aa).

The active-site Proton acceptor is the Asp68.

It belongs to the uracil-DNA glycosylase (UDG) superfamily. UNG family. Homodimer. Interacts with protein OPG148. Component of the Uracil-DNA glycosylase(UDG)-OPG148-polymerase complex; OPG148 and UDG form a heterodimeric processivity factor that associates with OPG71 to form the processive polymerase holoenzyme.

It carries out the reaction Hydrolyzes single-stranded DNA or mismatched double-stranded DNA and polynucleotides, releasing free uracil.. In terms of biological role, plays an essential role in viral replication as a component of the DNA polymerase processivity factor. Excises uracil residues from the DNA which can arise as a result of misincorporation of dUMP residues by DNA polymerase or due to deamination of cytosine. The sequence is that of Uracil-DNA glycosylase (OPG116) from Bos taurus (Bovine).